Here is a 74-residue protein sequence, read N- to C-terminus: Cytochrome b (74 aa).

The helical transmembrane segment at 34-54 threads the bilayer; it reads FGSLLAICLVTQILTGLLLAM.

It belongs to the cytochrome b family. As to quaternary structure, the cytochrome bc1 complex contains 11 subunits: 3 respiratory subunits (MT-CYB, CYC1 and UQCRFS1), 2 core proteins (UQCRC1 and UQCRC2) and 6 low-molecular weight proteins (UQCRH/QCR6, UQCRB/QCR7, UQCRQ/QCR8, UQCR10/QCR9, UQCR11/QCR10 and a cleavage product of UQCRFS1). This cytochrome bc1 complex then forms a dimer. The cofactor is heme.

The protein resides in the mitochondrion inner membrane. Its function is as follows. Component of the ubiquinol-cytochrome c reductase complex (complex III or cytochrome b-c1 complex) that is part of the mitochondrial respiratory chain. The b-c1 complex mediates electron transfer from ubiquinol to cytochrome c. Contributes to the generation of a proton gradient across the mitochondrial membrane that is then used for ATP synthesis. The protein is Cytochrome b (MT-CYB) of Anser caerulescens (Snow goose).